We begin with the raw amino-acid sequence, 123 residues long: Small ribosomal subunit protein bS16 (123 aa).

Residues 79-123 (AGIAKRPSRNNPTKGEPGKKAQERLALAKQAEEEAAAKAAEAASE) are disordered.

Belongs to the bacterial ribosomal protein bS16 family.

The protein is Small ribosomal subunit protein bS16 of Brucella melitensis biotype 2 (strain ATCC 23457).